Consider the following 154-residue polypeptide: MTTCSICNESEIKYKCPKCSFPYCSLPCWKIHQSQCETVNDNNTTTFKGVKEPLNPPEPSPNVIYVNGRIPSLAEEALPSESLLESIVEDPSIKNLIESNAELLHIMKELVNLDREEEGSVPLKTLDAIQQQRLHNPSFEKLASMILEKYYAQK.

Zn(2+)-binding residues include Cys4, Cys7, Cys16, Cys19, Cys24, Cys28, His32, and Cys36. The HIT-type zinc-finger motif lies at 4 to 36 (CSICNESEIKYKCPKCSFPYCSLPCWKIHQSQC).

This is an uncharacterized protein from Schizosaccharomyces pombe (strain 972 / ATCC 24843) (Fission yeast).